The following is a 1571-amino-acid chain: Pentafunctional AROM polypeptide (1571 aa).

Residues 1–380 form a 3-dehydroquinate synthase region; it reads MTSVEKVSIL…YQLKAHQVSK (380 aa). NAD(+)-binding positions include 43–45, 81–84, 112–114, and Asp117; these read DTN, ENNK, and GGV. Arg128 contacts 7-phospho-2-dehydro-3-deoxy-D-arabino-heptonate. NAD(+) is bound at residue 137-138; it reads TS. Residues Asp144 and Lys150 each contribute to the 7-phospho-2-dehydro-3-deoxy-D-arabino-heptonate site. Lys159 provides a ligand contact to NAD(+). Asn160 contacts 7-phospho-2-dehydro-3-deoxy-D-arabino-heptonate. NAD(+) is bound by residues 177-180 and Asn188; that span reads FLET. Residue Glu192 participates in Zn(2+) binding. 7-phospho-2-dehydro-3-deoxy-D-arabino-heptonate contacts are provided by residues 192 to 195 and Lys244; that span reads EVVK. The active-site Proton acceptor; for 3-dehydroquinate synthase activity is the Glu254. 7-phospho-2-dehydro-3-deoxy-D-arabino-heptonate contacts are provided by residues 258–262 and His265; that span reads RNLLN. A Zn(2+)-binding site is contributed by His265. His269 acts as the Proton acceptor; for 3-dehydroquinate synthase activity in catalysis. 7-phospho-2-dehydro-3-deoxy-D-arabino-heptonate-binding residues include His281 and Lys352. His281 serves as a coordination point for Zn(2+). Residues 393-843 form an EPSP synthase region; the sequence is VHPFDDKLIP…WDILHTKFKV (451 aa). Residue Cys825 is the For EPSP synthase activity of the active site. The segment at 868-1058 is shikimate kinase; sequence KRSIIVIGMR…IPKKRSFYTS (191 aa). Residue 875-882 participates in ATP binding; the sequence is GMRGAGKS. The 3-dehydroquinase stretch occupies residues 1059-1271; that stretch reads LTFSDLTEVA…GNEGALDVAQ (213 aa). The active-site Schiff-base intermediate with substrate; for 3-dehydroquinate dehydratase activity is the Lys1204. Residues 1284-1571 form a shikimate dehydrogenase region; the sequence is EKHFWIVGNP…DVVHDAVVNQ (288 aa).

The protein in the N-terminal section; belongs to the sugar phosphate cyclases superfamily. Dehydroquinate synthase family. It in the 2nd section; belongs to the EPSP synthase family. This sequence in the 3rd section; belongs to the shikimate kinase family. In the 4th section; belongs to the type-I 3-dehydroquinase family. The protein in the C-terminal section; belongs to the shikimate dehydrogenase family. In terms of assembly, homodimer. It depends on Zn(2+) as a cofactor.

The protein localises to the cytoplasm. The catalysed reaction is 7-phospho-2-dehydro-3-deoxy-D-arabino-heptonate = 3-dehydroquinate + phosphate. The enzyme catalyses 3-dehydroquinate = 3-dehydroshikimate + H2O. It catalyses the reaction shikimate + NADP(+) = 3-dehydroshikimate + NADPH + H(+). It carries out the reaction shikimate + ATP = 3-phosphoshikimate + ADP + H(+). The catalysed reaction is 3-phosphoshikimate + phosphoenolpyruvate = 5-O-(1-carboxyvinyl)-3-phosphoshikimate + phosphate. Its pathway is metabolic intermediate biosynthesis; chorismate biosynthesis; chorismate from D-erythrose 4-phosphate and phosphoenolpyruvate: step 2/7. The protein operates within metabolic intermediate biosynthesis; chorismate biosynthesis; chorismate from D-erythrose 4-phosphate and phosphoenolpyruvate: step 3/7. It functions in the pathway metabolic intermediate biosynthesis; chorismate biosynthesis; chorismate from D-erythrose 4-phosphate and phosphoenolpyruvate: step 4/7. It participates in metabolic intermediate biosynthesis; chorismate biosynthesis; chorismate from D-erythrose 4-phosphate and phosphoenolpyruvate: step 5/7. Its pathway is metabolic intermediate biosynthesis; chorismate biosynthesis; chorismate from D-erythrose 4-phosphate and phosphoenolpyruvate: step 6/7. The AROM polypeptide catalyzes 5 consecutive enzymatic reactions in prechorismate polyaromatic amino acid biosynthesis. This chain is Pentafunctional AROM polypeptide, found in Scheffersomyces stipitis (strain ATCC 58785 / CBS 6054 / NBRC 10063 / NRRL Y-11545) (Yeast).